The following is a 258-amino-acid chain: MKKAYLTVVSNREIADHIYEMTLKGDLVDSFQTAGQFLHIKVSESMTPLLRRPISIANIHAEKQEATIIYRAEGEGTKLLSQKRDGESIDVLGPLGNGYDPSVVQSGQTALLVGGGIGVPPLYELSKRLTKKGVIVKHVLGFQSKKDVFYEEKFQALGDTFIATVDGTYGAKGFVTNVIEENDLSFDVMLSCGPTPMLKALKDSYPDKPVYISMEERMGCGIGACFACVCHTDQHEKAYVKVCLDGPVFKAEEVALSC.

The region spanning 1–101 is the FAD-binding FR-type domain; the sequence is MKKAYLTVVS…LGPLGNGYDP (101 aa). Residues 52–55, 69–71, and 76–77 each bind FAD; these read RPIS, IYR, and GT. 4 residues coordinate [2Fe-2S] cluster: C220, C225, C228, and C243.

This sequence belongs to the PyrK family. In terms of assembly, heterotetramer of 2 PyrK and 2 PyrD type B subunits. The cofactor is [2Fe-2S] cluster. It depends on FAD as a cofactor.

It functions in the pathway pyrimidine metabolism; UMP biosynthesis via de novo pathway; orotate from (S)-dihydroorotate (NAD(+) route): step 1/1. Its function is as follows. Responsible for channeling the electrons from the oxidation of dihydroorotate from the FMN redox center in the PyrD type B subunit to the ultimate electron acceptor NAD(+). This Bacillus pumilus (strain SAFR-032) protein is Dihydroorotate dehydrogenase B (NAD(+)), electron transfer subunit.